The following is a 344-amino-acid chain: AA9 family lytic polysaccharide monooxygenase J (344 aa).

The first 20 residues, 1 to 20 (MKSSLLVVLTAGLAVRDAIA), serve as a signal peptide directing secretion. Residues His21 and His99 each coordinate Cu(2+). Cys58 and Cys194 form a disulfide bridge. Residues His180 and Gln189 each contribute to the O2 site. A Cu(2+)-binding site is contributed by Tyr191. The interval 272–301 (PGGKPASGGSDGNAPEVAEPSGGEGSPSAP) is disordered. Over residues 285–301 (APEVAEPSGGEGSPSAP) the composition is skewed to low complexity. The 38-residue stretch at 304–341 (CEVAAYGQCGGDQYSGCTQCASGYTCKAVSPPYYSQCA) folds into the CBM1 domain.

Belongs to the polysaccharide monooxygenase AA9 family. Cu(2+) is required as a cofactor.

The protein localises to the secreted. The enzyme catalyses [(1-&gt;4)-beta-D-glucosyl]n+m + reduced acceptor + O2 = 4-dehydro-beta-D-glucosyl-[(1-&gt;4)-beta-D-glucosyl]n-1 + [(1-&gt;4)-beta-D-glucosyl]m + acceptor + H2O.. Its function is as follows. Lytic polysaccharide monooxygenase (LPMO) that depolymerizes crystalline and amorphous polysaccharides via the oxidation of scissile alpha- or beta-(1-4)-glycosidic bonds, yielding C4 oxidation products. Catalysis by LPMOs requires the reduction of the active-site copper from Cu(II) to Cu(I) by a reducing agent and H(2)O(2) or O(2) as a cosubstrate. The protein is AA9 family lytic polysaccharide monooxygenase J (gh61-10) of Neurospora crassa (strain ATCC 24698 / 74-OR23-1A / CBS 708.71 / DSM 1257 / FGSC 987).